A 466-amino-acid polypeptide reads, in one-letter code: Alpha-1A adrenergic receptor (466 aa).

Topologically, residues 1 to 27 (MVFLSGNASDSSNCTHPPPPVNISKAI) are extracellular. Asparagine 7, asparagine 13, and asparagine 22 each carry an N-linked (GlcNAc...) asparagine glycan. The chain crosses the membrane as a helical span at residues 28-51 (LLGVILGGLILFGVLGNILVILSV). The Cytoplasmic segment spans residues 52–64 (ACHRHLHSVTHYY). The chain crosses the membrane as a helical span at residues 65-88 (IVNLAVADLLLTSTVLPFSAIFEI). At 89-99 (LGYWAFGRVFC) the chain is on the extracellular side. Cysteines 99 and 176 form a disulfide. The chain crosses the membrane as a helical span at residues 100-122 (NVWAAVDVLCCTASIMGLCIISI). The Cytoplasmic portion of the chain corresponds to 123–143 (DRYIGVSYPLRYPTIVTQKRG). Residues 144–167 (LMALLCVWALSLVISIGPLFGWRQ) traverse the membrane as a helical segment. Over 168 to 181 (PAPEDETICQINEE) the chain is Extracellular. A helical transmembrane segment spans residues 182-205 (PGYVLFSALGSFYVPLTIILVMYC). Residues 206–273 (RVYVVAKRES…FSREKKAAKT (68 aa)) are Cytoplasmic-facing. Serine 215 is subject to Phosphoserine; by PKA. The chain crosses the membrane as a helical span at residues 274-297 (LGIVVGCFVLCWLPFFLVMPIGSF). At 298-305 (FPDFRPSE) the chain is on the extracellular side. A helical membrane pass occupies residues 306 to 329 (TVFKIAFWLGYLNSCINPIIYPCS). Topologically, residues 330-466 (SQEFKKAFQN…ISLSENGEEV (137 aa)) are cytoplasmic. A Nuclear localization signal motif is present at residues 334 to 349 (KKAFQNVLRIQCLRRK). Cysteine 345 is lipidated: S-palmitoyl cysteine.

The protein belongs to the G-protein coupled receptor 1 family. Adrenergic receptor subfamily. ADRA1A sub-subfamily. In terms of assembly, homo- and heterooligomer. Heterooligomerizes with ADRA1B homooligomers in cardiac myocytes. Interacts with CAVIN4.

The protein localises to the nucleus membrane. It localises to the cell membrane. The protein resides in the cytoplasm. Its subcellular location is the membrane. It is found in the caveola. Functionally, this alpha-adrenergic receptor mediates its action by association with G proteins that activate a phosphatidylinositol-calcium second messenger system. Its effect is mediated by G(q) and G(11) proteins. Nuclear ADRA1A-ADRA1B heterooligomers regulate phenylephrine (PE)-stimulated ERK signaling in cardiac myocytes. The polypeptide is Alpha-1A adrenergic receptor (ADRA1A) (Bos taurus (Bovine)).